The primary structure comprises 63 residues: Large ribosomal subunit protein uL29 (63 aa).

This sequence belongs to the universal ribosomal protein uL29 family.

The sequence is that of Large ribosomal subunit protein uL29 from Ectopseudomonas mendocina (strain ymp) (Pseudomonas mendocina).